The sequence spans 297 residues: N-acetylmuramic acid 6-phosphate etherase (297 aa).

The 164-residue stretch at 56–219 (AIEAFNKGGR…STISMIGIGK (164 aa)) folds into the SIS domain. Glu-84 (proton donor) is an active-site residue. Glu-115 is an active-site residue.

The protein belongs to the GCKR-like family. MurNAc-6-P etherase subfamily. In terms of assembly, homodimer.

The enzyme catalyses N-acetyl-D-muramate 6-phosphate + H2O = N-acetyl-D-glucosamine 6-phosphate + (R)-lactate. It functions in the pathway amino-sugar metabolism; N-acetylmuramate degradation. Its function is as follows. Specifically catalyzes the cleavage of the D-lactyl ether substituent of MurNAc 6-phosphate, producing GlcNAc 6-phosphate and D-lactate. This chain is N-acetylmuramic acid 6-phosphate etherase, found in Lactococcus lactis subsp. cremoris (strain SK11).